We begin with the raw amino-acid sequence, 215 residues long: ATP phosphoribosyltransferase (215 aa).

The protein belongs to the ATP phosphoribosyltransferase family. Short subfamily. Heteromultimer composed of HisG and HisZ subunits.

It is found in the cytoplasm. The catalysed reaction is 1-(5-phospho-beta-D-ribosyl)-ATP + diphosphate = 5-phospho-alpha-D-ribose 1-diphosphate + ATP. It participates in amino-acid biosynthesis; L-histidine biosynthesis; L-histidine from 5-phospho-alpha-D-ribose 1-diphosphate: step 1/9. In terms of biological role, catalyzes the condensation of ATP and 5-phosphoribose 1-diphosphate to form N'-(5'-phosphoribosyl)-ATP (PR-ATP). Has a crucial role in the pathway because the rate of histidine biosynthesis seems to be controlled primarily by regulation of HisG enzymatic activity. This is ATP phosphoribosyltransferase from Lachnoclostridium phytofermentans (strain ATCC 700394 / DSM 18823 / ISDg) (Clostridium phytofermentans).